Here is a 160-residue protein sequence, read N- to C-terminus: Putative pre-16S rRNA nuclease (160 aa).

Belongs to the YqgF nuclease family.

It is found in the cytoplasm. Its function is as follows. Could be a nuclease involved in processing of the 5'-end of pre-16S rRNA. The sequence is that of Putative pre-16S rRNA nuclease from Cereibacter sphaeroides (strain KD131 / KCTC 12085) (Rhodobacter sphaeroides).